The chain runs to 743 residues: MEHTYQYAWIIPFVPLPVPMLIGVGLLLFPTATKNLRRVWAFHSVLLLSIVMIFSIDLSIQQINSSSIYQYVWSWVINNDFSLELGYLIDPLTSIMLILITTVGIMVLIYSDSYMSHDQGYLRFFAYMSFFSTSMLGLVTSSNLIQIYIFWELVGMCSYLLIGFWFTRPLAANACQKAFVTNRIGDLGLLLGILGFYWITGSFEFRDLFQIVTNLIYNNEVNLVFLTICAVLLFAGAVAKSAQFPLHVWLPDAMEGPTPISALIHAATMVAAGIFLVARLLPLFIVIPYILNLISFIGIITLLLGATLALAQKDIKRSLAYSTMSQLGYMMLALGMGSYRSALFHLITHAYPKALLFLGSGSVIHSMETVVGYSPDKSQNMVLMGGLTKHVPITKTAFFLGTLSLCGIPPLACFWSKDEILNDSWLYSPIFAIIACSTAGLTAFYMFRIYLLTFEGHLNVHFQNYSGKKNISFYSISLWGKGGLKTVNKNFCLLTLLTTNNESASFFSNKTYRIDENIRKMTRPFMTITHFGNKNTYSYPYESDNTMLLPLLVLVLFTLFVGAIGIPFNQEGMDLDILSKWLSPSINLLHQDLNNSMDWYEFVKDAIFSVSIAYFGIVIASFLYKPVYSSLQNLDLINSFVKTGPNRIFWDKIINVIYDWSYNRGYIDAFYATSLTGGIRGLAELTNFFDRRVIDGITNGVGVMSFFVGEGIRYLGGGRISSYLFLYLSYVSIFLLIYYFLNL.

14 consecutive transmembrane segments (helical) span residues 9-29 (WIIPFVPLPVPMLIGVGLLLF), 40-60 (WAFHSVLLLSIVMIFSIDLSI), 89-109 (IDPLTSIMLILITTVGIMVLI), 125-145 (FAYMSFFSTSMLGLVTSSNLI), 147-167 (IYIFWELVGMCSYLLIGFWFT), 184-204 (IGDLGLLLGILGFYWITGSFE), 219-239 (NEVNLVFLTICAVLLFAGAVA), 258-278 (TPISALIHAATMVAAGIFLVA), 280-300 (LLPLFIVIPYILNLISFIGII), 396-416 (TAFFLGTLSLCGIPPLACFWS), 425-445 (WLYSPIFAIIACSTAGLTAFY), 548-568 (LLPLLVLVLFTLFVGAIGIPF), 607-627 (IFSVSIAYFGIVIASFLYKPV), and 723-743 (YLFLYLSYVSIFLLIYYFLNL).

This sequence belongs to the complex I subunit 5 family. As to quaternary structure, NDH is composed of at least 16 different subunits, 5 of which are encoded in the nucleus.

It is found in the plastid. It localises to the chloroplast thylakoid membrane. It carries out the reaction a plastoquinone + NADH + (n+1) H(+)(in) = a plastoquinol + NAD(+) + n H(+)(out). It catalyses the reaction a plastoquinone + NADPH + (n+1) H(+)(in) = a plastoquinol + NADP(+) + n H(+)(out). Its function is as follows. NDH shuttles electrons from NAD(P)H:plastoquinone, via FMN and iron-sulfur (Fe-S) centers, to quinones in the photosynthetic chain and possibly in a chloroplast respiratory chain. The immediate electron acceptor for the enzyme in this species is believed to be plastoquinone. Couples the redox reaction to proton translocation, and thus conserves the redox energy in a proton gradient. This Carpenteria californica (Tree anemone) protein is NAD(P)H-quinone oxidoreductase subunit 5, chloroplastic (ndhF).